The sequence spans 90 residues: Probable Fe(2+)-trafficking protein (90 aa).

This sequence belongs to the Fe(2+)-trafficking protein family. Monomer.

Could be a mediator in iron transactions between iron acquisition and iron-requiring processes, such as synthesis and/or repair of Fe-S clusters in biosynthetic enzymes. The sequence is that of Probable Fe(2+)-trafficking protein from Pectobacterium carotovorum subsp. carotovorum (strain PC1).